The following is a 197-amino-acid chain: Putative RING-H2 finger protein ATL71 (197 aa).

A helical transmembrane segment spans residues 20 to 40 (MGGLAYGIGVSIGILMLITTI). The interval 53-80 (SASPTTTPRTRRRQRESNGTLPPGQERF) is disordered. An RING-type; atypical zinc finger spans residues 129-171 (CSICLADYKKMDMIRVLPDCNHLFHDNCVDPWLRLHPTCPVCR).

Belongs to the RING-type zinc finger family. ATL subfamily.

Its subcellular location is the membrane. It carries out the reaction S-ubiquitinyl-[E2 ubiquitin-conjugating enzyme]-L-cysteine + [acceptor protein]-L-lysine = [E2 ubiquitin-conjugating enzyme]-L-cysteine + N(6)-ubiquitinyl-[acceptor protein]-L-lysine.. It functions in the pathway protein modification; protein ubiquitination. This is Putative RING-H2 finger protein ATL71 (ATL71) from Arabidopsis thaliana (Mouse-ear cress).